A 255-amino-acid chain; its full sequence is Small ribosomal subunit protein eS1B (255 aa).

Residue Ala2 is modified to N-acetylalanine; partial. Ser245 carries the post-translational modification Phosphoserine. Lys248 participates in a covalent cross-link: Glycyl lysine isopeptide (Lys-Gly) (interchain with G-Cter in ubiquitin). Thr254 carries the phosphothreonine modification.

It belongs to the eukaryotic ribosomal protein eS1 family. Component of the small ribosomal subunit. Mature ribosomes consist of a small (40S) and a large (60S) subunit. The 40S subunit contains about 33 different proteins and 1 molecule of RNA (18S). The 60S subunit contains about 49 different proteins and 3 molecules of RNA (25S, 5.8S and 5S).

It is found in the cytoplasm. This chain is Small ribosomal subunit protein eS1B, found in Saccharomyces cerevisiae (strain JAY291) (Baker's yeast).